Consider the following 855-residue polypeptide: Potassium transporter 13 (855 aa).

A disordered region spans residues 1-67; sequence MFHVEEESSG…EMDSDEEDDN (67 aa). The Cytoplasmic segment spans residues 1 to 105; it reads MFHVEEESSG…EIEDTGIGKK (105 aa). Residues 36–51 are compositionally biased toward acidic residues; that stretch reads EKDDYEVNEDYDDDGY. Residues 106 to 126 traverse the membrane as a helical segment; that stretch reads LILALQTLGVVFGDIGTSPLY. Residues 127–142 lie on the Extracellular side of the membrane; the sequence is TFTVMFRRSPINDKED. Residues 143 to 163 traverse the membrane as a helical segment; sequence IIGALSLVIYTLILIPLVKYV. Topologically, residues 164–233 are cytoplasmic; it reads HFVLWANDDG…RLEASMALKK (70 aa). The chain crosses the membrane as a helical span at residues 234 to 254; the sequence is LLLILVLAGTAMVIADAVVTP. The Extracellular segment spans residues 255-268; that stretch reads AMSVMSAIGGLKVG. A helical membrane pass occupies residues 269-289; that stretch reads VGVIEQDQVVVISVSFLVILF. Topologically, residues 290 to 298 are cytoplasmic; the sequence is SVQKYGTSK. Residues 299 to 319 form a helical membrane-spanning segment; it reads LGLVLGPALLLWFFCLAGIGI. The Extracellular segment spans residues 320–346; that stretch reads YNLVKYDSSVFKAFNPAYIYFFFKRNS. The chain crosses the membrane as a helical span at residues 347–367; that stretch reads VNAWYALGGCVLCATGSEAMF. Residues 368–379 are Cytoplasmic-facing; it reads ADLSYFSVHSIQ. The chain crosses the membrane as a helical span at residues 380–400; the sequence is LTFILLVLPCLLLGYLGQAAY. The Extracellular segment spans residues 401–415; it reads LSENFSAAGDAFFSS. Asn404 carries N-linked (GlcNAc...) asparagine glycosylation. A helical transmembrane segment spans residues 416 to 436; it reads VPSSLFWPVFLISNVAALIAS. At 437-467 the chain is on the cytoplasmic side; that stretch reads RAMTTATFTCIKQSIALGCFPRLKIIHTSKK. Residues 468 to 488 form a helical membrane-spanning segment; sequence FIGQIYIPVLNWSLLVVCLIV. The Extracellular segment spans residues 489–503; sequence VCSTSNIFAIGNAYG. Residues 504-524 traverse the membrane as a helical segment; that stretch reads IAELGIMMTTTILVTLIMLLI. The Cytoplasmic portion of the chain corresponds to 525–528; it reads WQTN. Residues 529-549 form a helical membrane-spanning segment; that stretch reads IIVVSMFAIVSLIVELVFFSS. Residues 550–553 are Extracellular-facing; the sequence is VCSS. Residues 554 to 574 traverse the membrane as a helical segment; sequence VADGSWIILVFATIMFLIMFV. Residues 575–855 are Cytoplasmic-facing; sequence WNYGSKLKYE…LMQVGMTYMV (281 aa). Ser766 is subject to Phosphoserine.

The protein belongs to the HAK/KUP transporter (TC 2.A.72.3) family.

The protein localises to the cell membrane. Its function is as follows. Probable potassium transporter. This is Potassium transporter 13 (POT13) from Arabidopsis thaliana (Mouse-ear cress).